A 329-amino-acid polypeptide reads, in one-letter code: Secretory carrier-associated membrane protein 2 (329 aa).

The tract at residues 1–74 (MSAFDTNPFA…PSVEPAQPTP (74 aa)) is disordered. The Cytoplasmic segment spans residues 1–153 (MSAFDTNPFA…DYQRICKMLY (153 aa)). 2 stretches are compositionally biased toward polar residues: residues 19-31 (QDPS…NAPQ) and 40-51 (FSETNAATTVPA). Residues 154-174 (YLWMLHSVTLFLNLLACLAWF) traverse the membrane as a helical segment. Topologically, residues 175–181 (TSDAANG) are lumenal. A helical transmembrane segment spans residues 182 to 202 (TAFGLSILWFLIFTPCAFLCW). Topologically, residues 203–218 (YRPIYKAFRSDNSFSF) are cytoplasmic. The interaction with SLC9A7 stretch occupies residues 203–218 (YRPIYKAFRSDNSFSF). Residues 219–239 (FVFFFVFFCQIGIYFIQLIGL) traverse the membrane as a helical segment. The Lumenal portion of the chain corresponds to 240–262 (PNLGTSGWLAALSTMKNGPLAVT). The helical transmembrane segment at 263–283 (IIMMVVAGFFTLCAGLSLFLL) threads the bilayer. At 284-329 (QRVHAFYRRTGASFQQAQEEFSQGIFSSRTFRGAASSAARGAFQGN) the chain is on the cytoplasmic side. Ser319 and Ser320 each carry phosphoserine.

This sequence belongs to the SCAMP family. In terms of assembly, interacts with SLC6A4 and SLC9A7. Interacts with SLC9A5; this interaction regulates SLC9A5 cell-surface targeting and SLC9A5 activity.

The protein localises to the golgi apparatus. It localises to the trans-Golgi network membrane. It is found in the recycling endosome membrane. Its function is as follows. Functions in post-Golgi recycling pathways. Acts as a recycling carrier to the cell surface. This is Secretory carrier-associated membrane protein 2 (Scamp2) from Mus musculus (Mouse).